Reading from the N-terminus, the 259-residue chain is Deoxyribose-phosphate aldolase (259 aa).

Aspartate 104 acts as the Proton donor/acceptor in catalysis. Residue lysine 168 is the Schiff-base intermediate with acetaldehyde of the active site. Lysine 200 functions as the Proton donor/acceptor in the catalytic mechanism.

It belongs to the DeoC/FbaB aldolase family. DeoC type 2 subfamily.

The protein localises to the cytoplasm. The enzyme catalyses 2-deoxy-D-ribose 5-phosphate = D-glyceraldehyde 3-phosphate + acetaldehyde. It functions in the pathway carbohydrate degradation; 2-deoxy-D-ribose 1-phosphate degradation; D-glyceraldehyde 3-phosphate and acetaldehyde from 2-deoxy-alpha-D-ribose 1-phosphate: step 2/2. Functionally, catalyzes a reversible aldol reaction between acetaldehyde and D-glyceraldehyde 3-phosphate to generate 2-deoxy-D-ribose 5-phosphate. In Agrobacterium fabrum (strain C58 / ATCC 33970) (Agrobacterium tumefaciens (strain C58)), this protein is Deoxyribose-phosphate aldolase.